The following is a 326-amino-acid chain: tRNA N6-adenosine threonylcarbamoyltransferase (326 aa).

Residues His-113 and His-117 each coordinate Fe cation. Substrate-binding positions include 134-138 (VASGG), Asp-167, Gly-180, and Asn-267. Asp-291 is a binding site for Fe cation.

The protein belongs to the KAE1 / TsaD family. Requires Fe(2+) as cofactor.

It localises to the cytoplasm. The catalysed reaction is L-threonylcarbamoyladenylate + adenosine(37) in tRNA = N(6)-L-threonylcarbamoyladenosine(37) in tRNA + AMP + H(+). Its function is as follows. Required for the formation of a threonylcarbamoyl group on adenosine at position 37 (t(6)A37) in tRNAs that read codons beginning with adenine. Is involved in the transfer of the threonylcarbamoyl moiety of threonylcarbamoyl-AMP (TC-AMP) to the N6 group of A37, together with TsaE and TsaB. TsaD likely plays a direct catalytic role in this reaction. This chain is tRNA N6-adenosine threonylcarbamoyltransferase, found in Thermus thermophilus (strain ATCC 27634 / DSM 579 / HB8).